A 195-amino-acid chain; its full sequence is Putative NADH dehydrogenase/NAD(P)H nitroreductase RSc1004 (195 aa).

This sequence belongs to the nitroreductase family. HadB/RutE subfamily. The cofactor is FMN.

The protein is Putative NADH dehydrogenase/NAD(P)H nitroreductase RSc1004 of Ralstonia nicotianae (strain ATCC BAA-1114 / GMI1000) (Ralstonia solanacearum).